The primary structure comprises 370 residues: Cyanuric acid amidohydrolase (370 aa).

Residues 1–103 (MQAQVFRVPM…TIFTVQKTDN (103 aa)) are RU A. Substrate-binding positions include R51 and 82–83 (SG). Residues 113–250 (RLAVQQIFTR…NEIIVMGNSR (138 aa)) are RU B. K163 is an active-site residue. Substrate is bound by residues R195 and 233–234 (SA). The Nucleophile role is filled by S233. The segment at 256–370 (LVIGHAEMKD…GPVAVIARTA (115 aa)) is RU C. A Mg(2+)-binding site is contributed by E303. Residues R330 and 349 to 350 (SG) contribute to the substrate site. Mg(2+) is bound by residues S352, Q355, G356, P357, and G360.

The protein belongs to the cyclic amide hydrolase (CyAH) family. In terms of assembly, homotetramer.

The enzyme catalyses cyanurate + H2O = 1-carboxybiuret + H(+). Its pathway is xenobiotic degradation; atrazine degradation; biuret from cyanurate: step 1/1. Its activity is regulated as follows. Inhibited by barbituric acid. Responsible for the hydrolysis of cyanuric acid, an intermediate formed during catabolism of s-triazine based compounds in herbicides such as atrazine and polymers such as melamine. Catalyzes the hydrolytic opening of the s-triazine ring of cyanuric acid (2,4,6-trihydroxy-s-triazine) to yield carbon dioxide and carboxybiuret, which spontaneously decarboxylates to biuret. This is Cyanuric acid amidohydrolase (trzD) from Pseudomonas sp.